Reading from the N-terminus, the 327-residue chain is GMP reductase (327 aa).

Cys-176 serves as the catalytic Thioimidate intermediate. Position 205 to 228 (205 to 228 (IIADGGIRTHGDIAKSIRFGASMV)) interacts with NADP(+).

It belongs to the IMPDH/GMPR family. GuaC type 2 subfamily.

It catalyses the reaction IMP + NH4(+) + NADP(+) = GMP + NADPH + 2 H(+). Catalyzes the irreversible NADPH-dependent deamination of GMP to IMP. It functions in the conversion of nucleobase, nucleoside and nucleotide derivatives of G to A nucleotides, and in maintaining the intracellular balance of A and G nucleotides. This is GMP reductase from Streptococcus agalactiae serotype III (strain NEM316).